The sequence spans 296 residues: Polyamine aminopropyltransferase (296 aa).

The region spanning 5-238 is the PABS domain; sequence ELWYETLHAN…GIMTFAWATQ (234 aa). Glutamine 33 contacts S-methyl-5'-thioadenosine. 2 residues coordinate spermidine: histidine 64 and aspartate 88. S-methyl-5'-thioadenosine-binding positions include glutamate 108 and 140-141; that span reads DG. Aspartate 158 serves as the catalytic Proton acceptor. 158-161 serves as a coordination point for spermidine; it reads DCTD. Proline 165 is a binding site for S-methyl-5'-thioadenosine.

It belongs to the spermidine/spermine synthase family. Homodimer or homotetramer.

It is found in the cytoplasm. It carries out the reaction S-adenosyl 3-(methylsulfanyl)propylamine + putrescine = S-methyl-5'-thioadenosine + spermidine + H(+). The protein operates within amine and polyamine biosynthesis; spermidine biosynthesis; spermidine from putrescine: step 1/1. In terms of biological role, catalyzes the irreversible transfer of a propylamine group from the amino donor S-adenosylmethioninamine (decarboxy-AdoMet) to putrescine (1,4-diaminobutane) to yield spermidine. This Yersinia pseudotuberculosis serotype O:1b (strain IP 31758) protein is Polyamine aminopropyltransferase.